The primary structure comprises 681 residues: DNA-directed RNA polymerase subunit beta' (681 aa).

Zn(2+) contacts are provided by Cys-69, Cys-71, Cys-87, and Cys-90. Asp-489, Asp-491, and Asp-493 together coordinate Mg(2+).

Belongs to the RNA polymerase beta' chain family. RpoC1 subfamily. In terms of assembly, in plastids the minimal PEP RNA polymerase catalytic core is composed of four subunits: alpha, beta, beta', and beta''. When a (nuclear-encoded) sigma factor is associated with the core the holoenzyme is formed, which can initiate transcription. Mg(2+) serves as cofactor. The cofactor is Zn(2+).

The protein localises to the plastid. It localises to the chloroplast. The catalysed reaction is RNA(n) + a ribonucleoside 5'-triphosphate = RNA(n+1) + diphosphate. In terms of biological role, DNA-dependent RNA polymerase catalyzes the transcription of DNA into RNA using the four ribonucleoside triphosphates as substrates. This Nicotiana sylvestris (Wood tobacco) protein is DNA-directed RNA polymerase subunit beta'.